The sequence spans 267 residues: GTP cyclohydrolase FolE2 (267 aa).

Belongs to the GTP cyclohydrolase IV family.

It carries out the reaction GTP + H2O = 7,8-dihydroneopterin 3'-triphosphate + formate + H(+). It functions in the pathway cofactor biosynthesis; 7,8-dihydroneopterin triphosphate biosynthesis; 7,8-dihydroneopterin triphosphate from GTP: step 1/1. Converts GTP to 7,8-dihydroneopterin triphosphate. The polypeptide is GTP cyclohydrolase FolE2 (Nitrosococcus oceani (strain ATCC 19707 / BCRC 17464 / JCM 30415 / NCIMB 11848 / C-107)).